We begin with the raw amino-acid sequence, 251 residues long: Cell division protein ZapD (251 aa).

This sequence belongs to the ZapD family. In terms of assembly, interacts with FtsZ.

It is found in the cytoplasm. Cell division factor that enhances FtsZ-ring assembly. Directly interacts with FtsZ and promotes bundling of FtsZ protofilaments, with a reduction in FtsZ GTPase activity. The sequence is that of Cell division protein ZapD from Burkholderia mallei (strain NCTC 10247).